The sequence spans 389 residues: Phospho-N-acetylmuramoyl-pentapeptide-transferase (389 aa).

10 consecutive transmembrane segments (helical) span residues 25–45 (RAVAATITALLIGLVCGPWVI), 73–93 (TMGGVLILIGIAVSTLLWADL), 97–117 (FIWIVMLVTFGFGVIGWVDDY), 135–155 (FWQSLIGLFAAVYLAFSVSEA), 189–209 (SMTYPLGVWGFIALTYLVIVG), 222–242 (GLVIMPVVLVGSSLGVFAYVM), 259–279 (AGEMLIFCSAMGGAGLAFLWF), 286–306 (VFMGDVGALALGGALGTIAVI), 311–331 (IVLFIMGGIFVAETVSVMLQV), and 366–386 (QVVVRFWIITLMLCLFGLSTL).

The protein belongs to the glycosyltransferase 4 family. MraY subfamily. Requires Mg(2+) as cofactor.

It is found in the cell inner membrane. It catalyses the reaction UDP-N-acetyl-alpha-D-muramoyl-L-alanyl-gamma-D-glutamyl-meso-2,6-diaminopimeloyl-D-alanyl-D-alanine + di-trans,octa-cis-undecaprenyl phosphate = di-trans,octa-cis-undecaprenyl diphospho-N-acetyl-alpha-D-muramoyl-L-alanyl-D-glutamyl-meso-2,6-diaminopimeloyl-D-alanyl-D-alanine + UMP. It participates in cell wall biogenesis; peptidoglycan biosynthesis. Its function is as follows. Catalyzes the initial step of the lipid cycle reactions in the biosynthesis of the cell wall peptidoglycan: transfers peptidoglycan precursor phospho-MurNAc-pentapeptide from UDP-MurNAc-pentapeptide onto the lipid carrier undecaprenyl phosphate, yielding undecaprenyl-pyrophosphoryl-MurNAc-pentapeptide, known as lipid I. In Paraburkholderia phymatum (strain DSM 17167 / CIP 108236 / LMG 21445 / STM815) (Burkholderia phymatum), this protein is Phospho-N-acetylmuramoyl-pentapeptide-transferase.